A 240-amino-acid polypeptide reads, in one-letter code: Orotidine 5'-phosphate decarboxylase (240 aa).

Substrate-binding positions include D12, K34, 62–71 (DMKLFDIGNT), T117, R180, Q189, G209, and R210. The active-site Proton donor is the K64.

It belongs to the OMP decarboxylase family. Type 1 subfamily. Homodimer.

It carries out the reaction orotidine 5'-phosphate + H(+) = UMP + CO2. It participates in pyrimidine metabolism; UMP biosynthesis via de novo pathway; UMP from orotate: step 2/2. Its function is as follows. Catalyzes the decarboxylation of orotidine 5'-monophosphate (OMP) to uridine 5'-monophosphate (UMP). This chain is Orotidine 5'-phosphate decarboxylase, found in Ruegeria pomeroyi (strain ATCC 700808 / DSM 15171 / DSS-3) (Silicibacter pomeroyi).